The chain runs to 247 residues: ATP synthase subunit a, chloroplastic (247 aa).

Helical transmembrane passes span 38–58, 95–115, 134–154, 199–219, and 220–240; these read QVLI…ILVV, VPFI…GALL, INTT…AGIS, LVVV…VMFL, and GLFT…AYIG.

The protein belongs to the ATPase A chain family. As to quaternary structure, F-type ATPases have 2 components, CF(1) - the catalytic core - and CF(0) - the membrane proton channel. CF(1) has five subunits: alpha(3), beta(3), gamma(1), delta(1), epsilon(1). CF(0) has four main subunits: a, b, b' and c.

It localises to the plastid. The protein localises to the chloroplast thylakoid membrane. Its function is as follows. Key component of the proton channel; it plays a direct role in the translocation of protons across the membrane. The protein is ATP synthase subunit a, chloroplastic of Lotus japonicus (Lotus corniculatus var. japonicus).